Consider the following 308-residue polypeptide: General transcription factor IIH subunit 3 (308 aa).

The segment at 268-285 adopts a C4-type zinc-finger fold; it reads CSVCLSIFCNFSPICTTC.

It belongs to the TFB4 family. In terms of assembly, part of a TFIID-containing RNA polymerase II pre-initiation complex that is composed of TBP and at least GTF2A1, GTF2A2, GTF2E1, GTF2E2, GTF2F1, GTF2H2, GTF2H3, GTF2H4, GTF2H5, GTF2B, TCEA1, ERCC2, ERCC3, TAF1, TAF2, TAF3, TAF4, TAF5, TAF6, TAF7, TAF8, TAF9, TAF10, TAF11, TAF12 and TAF13. Component of the 7-subunit TFIIH core complex composed of XPB/ERCC3, XPD/ERCC2, GTF2H1, GTF2H2, GTF2H3, GTF2H4 and GTF2H5, which is active in NER. The core complex associates with the 3-subunit CDK-activating kinase (CAK) module composed of CCNH/cyclin H, CDK7 and MNAT1 to form the 10-subunit holoenzyme (holo-TFIIH) active in transcription. Interacts with RARA; the interaction requires prior phosphorylation of RARA on 'Ser-369' which then enhances interaction of RARA with CDK7.

The protein localises to the nucleus. Its function is as follows. Component of the general transcription and DNA repair factor IIH (TFIIH) core complex, which is involved in general and transcription-coupled nucleotide excision repair (NER) of damaged DNA and, when complexed to CAK, in RNA transcription by RNA polymerase II. In NER, TFIIH acts by opening DNA around the lesion to allow the excision of the damaged oligonucleotide and its replacement by a new DNA fragment. In transcription, TFIIH has an essential role in transcription initiation. When the pre-initiation complex (PIC) has been established, TFIIH is required for promoter opening and promoter escape. Phosphorylation of the C-terminal tail (CTD) of the largest subunit of RNA polymerase II by the kinase module CAK controls the initiation of transcription. This is General transcription factor IIH subunit 3 (GTF2H3) from Homo sapiens (Human).